Consider the following 147-residue polypeptide: Large ribosomal subunit protein uL15 (147 aa).

The segment covering 1–13 (MKLENLKSKEGSR) has biased composition (basic and acidic residues). The segment at 1-54 (MKLENLKSKEGSRHKTKRVGRGFGSGIGKTSTRGSKGQKSRKSGHTRPGFEGGQ) is disordered. Residues 36 to 45 (KGQKSRKSGH) show a composition bias toward basic residues.

Belongs to the universal ribosomal protein uL15 family. In terms of assembly, part of the 50S ribosomal subunit.

In terms of biological role, binds to the 23S rRNA. This is Large ribosomal subunit protein uL15 from Malacoplasma penetrans (strain HF-2) (Mycoplasma penetrans).